A 309-amino-acid polypeptide reads, in one-letter code: Manganese ABC transporter substrate-binding lipoprotein PsaA (309 aa).

A signal peptide spans 1-19 (MKKLGTLFVLFLSVIVLVA). Cys20 carries the N-palmitoyl cysteine lipid modification. The S-diacylglycerol cysteine moiety is linked to residue Cys20. His67, His139, Glu205, and Asp280 together coordinate Mn(2+).

The protein belongs to the bacterial solute-binding protein 9 family. Lipoprotein receptor antigen (Lrai) subfamily.

Its subcellular location is the cell membrane. In terms of biological role, part of the ATP-riven (ABC) transport system PsaABC involved in manganese import. Binds manganese with high affinity and specificity and delivers it to the membrane permease for translocation into the cytoplasm. Also acts as an adhesin which is involved on adherence to extracellular matrix. This Streptococcus mitis protein is Manganese ABC transporter substrate-binding lipoprotein PsaA (psaA).